Consider the following 461-residue polypeptide: ATP synthase subunit beta (461 aa).

151-158 (GGAGVGKT) is a binding site for ATP.

The protein belongs to the ATPase alpha/beta chains family. F-type ATPases have 2 components, CF(1) - the catalytic core - and CF(0) - the membrane proton channel. CF(1) has five subunits: alpha(3), beta(3), gamma(1), delta(1), epsilon(1). CF(0) has three main subunits: a(1), b(2) and c(9-12). The alpha and beta chains form an alternating ring which encloses part of the gamma chain. CF(1) is attached to CF(0) by a central stalk formed by the gamma and epsilon chains, while a peripheral stalk is formed by the delta and b chains.

The protein localises to the cell inner membrane. The catalysed reaction is ATP + H2O + 4 H(+)(in) = ADP + phosphate + 5 H(+)(out). Functionally, produces ATP from ADP in the presence of a proton gradient across the membrane. The catalytic sites are hosted primarily by the beta subunits. The chain is ATP synthase subunit beta from Pseudoalteromonas translucida (strain TAC 125).